Reading from the N-terminus, the 932-residue chain is MCESYSRSLLRVSVAQICQALGWDSVQLSACHLLTDVLQRYLQQLGRGCHRYSELYGRTDPILDDVGEAFQLMGVNLHELEDYIHNIEPVTFPHQIPSFPVSKNNVLQFPQPGSKDAEERKDYIPDYLPPIVSSQEEEEEEQVPTDGGTSAEAMQVPLEEDDEMEEEEVINDENFLGKRPLDSPEVEEMPSMKRPRLLSTKGDSLDVVLLEAREPLSSINPQKTPPVLSPVRVQDRADLAPPSPQPPMLAPFAKSQLPIAKPLETKSFTPKTKTKASSPGQKTKSPKAALSPARLGSPIRSPKTIPKEKKSPGRSKSPKSPKSPKIVAHVPQTPVRPETPNRTPSAMVVEKTVKETIPVMKPTQTPPEVVKLNIEMQPKKPVVTDKTIDDSIDAVIARACAEREPDPFEFSSGSESEGDTFTSPKRISGSECATPKASTSSNNFTKSLATPLPLSSGTSSSDNSWTMDASIDEVVRKAKLGAPSNMPPTFPYISSPSISPPTPEPLHKGYEEKAKLPSSVDVKKKLKKELKTKLKKKEKQRDRERERERNKERSKEKDKMREREKEKEAGKELKYPWRELMKDEDSDPYKFKIKEFEDIDAAKVRLKDGIVRREREKHKDKKKDRERSKREKDKRERERLKEKNREDKIKAPPTQLVLPPKEMALPLFSPSAVRVPAMLPAFSPMLPEKLFEEKEKPKEKERKKDKKEKKKKKEKEKEKEKKEREREKERREREKREKEKEKHKHEKIKVEPVIPAPSPVIPRLTLRVGAGQDKIVISKVVPAPEAKPAPSLNRPKTPPPAPVPIPVRVSPTPLQPPLLTQAAVCPALMPSPAPALSGIGSAKAPVRSVVTETVSTYVIRDEWGNQIWICPGCNKPDDGSPMIGCDDCDDWYHWPCVGIMAAPPEEMQWFCPKCANKIKKDKKHKKRKHRAH.

4 disordered regions span residues 130-201, 213-347, 403-465, and 480-579; these read PIVS…LSTK, REPL…PSAM, REPD…DNSW, and LGAP…PWRE. Acidic residues predominate over residues 158–171; the sequence is LEEDDEMEEEEVIN. Residues S183, S199, S229, and S243 each carry the phosphoserine modification. K266 carries the N6-acetyllysine modification. A compositionally biased stretch (polar residues) spans 266–283; it reads KSFTPKTKTKASSPGQKT. Residues S291, S297, and S301 each carry the phosphoserine modification. Positions 408–423 are enriched in low complexity; the sequence is FEFSSGSESEGDTFTS. A compositionally biased stretch (polar residues) spans 436–446; sequence KASTSSNNFTK. Residues 447–461 show a composition bias toward low complexity; that stretch reads SLATPLPLSSGTSSS. A Phosphothreonine modification is found at T502. The segment covering 505-515 has biased composition (basic and acidic residues); the sequence is PLHKGYEEKAK. Positions 524–538 are enriched in basic residues; it reads KKLKKELKTKLKKKE. A compositionally biased stretch (basic and acidic residues) spans 539–579; it reads KQRDRERERERNKERSKEKDKMREREKEKEAGKELKYPWRE. A Glycyl lysine isopeptide (Lys-Gly) (interchain with G-Cter in SUMO2) cross-link involves residue K582. The segment at 607 to 657 is disordered; sequence KDGIVRREREKHKDKKKDRERSKREKDKRERERLKEKNREDKIKAPPTQLV. Residues 623-650 show a composition bias toward basic and acidic residues; it reads KDRERSKREKDKRERERLKEKNREDKIK. Residue S669 is modified to Phosphoserine. The interval 681–746 is disordered; the sequence is AFSPMLPEKL…EKEKEKHKHE (66 aa). A compositionally biased stretch (basic and acidic residues) spans 689–702; that stretch reads KLFEEKEKPKEKER. The span at 703-714 shows a compositional bias: basic residues; the sequence is KKDKKEKKKKKE. A compositionally biased stretch (basic and acidic residues) spans 715–740; that stretch reads KEKEKEKKEREREKERREREKREKEK. A Glycyl lysine isopeptide (Lys-Gly) (interchain with G-Cter in SUMO2) cross-link involves residue K749. S758 is modified (phosphoserine). Position 779 is an N6-acetyllysine (K779). The PHD-type zinc finger occupies 867–917; it reads IWICPGCNKPDDGSPMIGCDDCDDWYHWPCVGIMAAPPEEMQWFCPKCANK.

This sequence belongs to the TAF3 family. As to quaternary structure, component of the TFIID basal transcription factor complex, composed of TATA-box-binding protein TBP, and a number of TBP-associated factors (TAFs), including TAF1, TAF2, TAF3, TAF4, TAF5, TAF6, TAF7, TAF8, TAF9, TAF10, TAF11, TAF12 and TAF13. Interacts with TAF10 via histone fold. Interacts with TAF13, TBP, SAP130 and GCN5L2. Interacts with TBPL2.

It localises to the nucleus. Its function is as follows. The TFIID basal transcription factor complex plays a major role in the initiation of RNA polymerase II (Pol II)-dependent transcription. TFIID recognizes and binds promoters with or without a TATA box via its subunit TBP, a TATA-box-binding protein, and promotes assembly of the pre-initiation complex (PIC). The TFIID complex consists of TBP and TBP-associated factors (TAFs), including TAF1, TAF2, TAF3, TAF4, TAF5, TAF6, TAF7, TAF8, TAF9, TAF10, TAF11, TAF12 and TAF13. The TFIID complex structure can be divided into 3 modules TFIID-A, TFIID-B, and TFIID-C. TAF3 forms the TFIID-A module together with TAF5 and TBP. Required in complex with TBPL2 for the differentiation of myoblasts into myocytes. The TAF3-TBPL2 complex replaces TFIID at specific promoters at an early stage in the differentiation process. This is Transcription initiation factor TFIID subunit 3 (Taf3) from Mus musculus (Mouse).